Consider the following 586-residue polypeptide: MNKLRQKYLQKWLRAQQEPIKKLMRANIVLATLSSFILVAQTYFLATLLDKLIMQNVPRDELIPYFLGLIIGFGMRAIILWAREKIGFQSGQLLRNHIRQKILDKIHLVGPATINQKPAGSWASIMLEQVENLHNFYARFLPQQSLSAIVPVVIFIAVFPLNWAAGLILMITAPLVPLFMIIVGIAAADNSQKNMDTLSRLSAQFLDRLRGLETLRLFNRTSEQTEHIENATEDFRETTMDVLKLAFLSSAVLEFFTSISIALMAVYFGFSYLGQIEFGTYNAPLTLFTGFFCLILAPEFYQPLRDLGTYYHDRAAGIGAADAIVDFLESDYLTVHQNEKTISLESAVEISAENLVVLSTQGSALTKPLNFQIPANHNVALVGQSGAGKTSLMNVILGFLPYEGSLKINGQELRESNLADWRKHIAWVGQNPLLLQGTIKENLLLGDVQANDEEINQALMRSQAKEFTDKLGLHHEIKDGGLGISVGQAQRLAIARALLRKGDLLLLDEPTASLDAQSENLVLQALNEASQHQTTLMITHRIEDLKQCDQIFVMQRGEIVQQGKFTELQHEGFFAELLAQRQQDIQ.

A run of 6 helical transmembrane segments spans residues Ile28–Leu48, Leu62–Ala82, Leu146–Gly166, Leu167–Ala187, Ser250–Phe270, and Phe278–Pro298. The ABC transmembrane type-1 domain occupies Ile28–Ala316. In terms of domain architecture, ABC transporter spans Ile350 to Arg581. Gly383 to Thr390 is an ATP binding site.

The protein belongs to the ABC transporter superfamily. Cysteine exporter (TC 3.A.1.129.1) family. As to quaternary structure, forms a heterodimer with CydC.

It is found in the cell inner membrane. It carries out the reaction L-cysteine(in) + ATP + H2O = L-cysteine(out) + ADP + phosphate + H(+). It catalyses the reaction glutathione(in) + ATP + H2O = glutathione(out) + ADP + phosphate + H(+). Its function is as follows. Part of the ABC transporter complex CydDC that exports the reduced low-molecular-weight thiols cysteine and glutathione to the periplasm. Export of these thiol-containing redox-active molecules may be crucial for redox homeostasis in the periplasm, permitting correct assembly of various respiratory complexes and formation of correct disulfide bonds in periplasmic and secreted proteins. CydD contains transmembrane domains (TMD), which form a pore in the inner membrane, and an ATP-binding domain (NBD), which is responsible for energy generation. Required for the assembly of functional cytochrome bd-type quinol oxidases and periplasmic c-type cytochromes. The protein is Glutathione/L-cysteine transport system ATP-binding/permease protein CydD (cydD) of Haemophilus influenzae (strain ATCC 51907 / DSM 11121 / KW20 / Rd).